We begin with the raw amino-acid sequence, 386 residues long: Methionine import ATP-binding protein MetN 2 (386 aa).

An ABC transporter domain is found at 32 to 272 (VIFDDVGKVF…PQHDATRALL (241 aa)). Position 69–76 (69–76 (GRSGAGKS)) interacts with ATP.

The protein belongs to the ABC transporter superfamily. Methionine importer (TC 3.A.1.24) family. The complex is composed of two ATP-binding proteins (MetN), two transmembrane proteins (MetI) and a solute-binding protein (MetQ).

Its subcellular location is the cell inner membrane. It carries out the reaction L-methionine(out) + ATP + H2O = L-methionine(in) + ADP + phosphate + H(+). The catalysed reaction is D-methionine(out) + ATP + H2O = D-methionine(in) + ADP + phosphate + H(+). In terms of biological role, part of the ABC transporter complex MetNIQ involved in methionine import. Responsible for energy coupling to the transport system. This is Methionine import ATP-binding protein MetN 2 from Paraburkholderia xenovorans (strain LB400).